Consider the following 848-residue polypeptide: MYVIHLAEADESNASISSEEDLGHLDYSKPFAAKQTQPKKSISQIIKDKKKQTQLTLQWLEDNYIVCEGVCLPRCILYAHYLDFCRKEKLDPACAATFGKTIRQKFPLLTTRRLGTRGHSKYHYYGIGIKESSAYYHSVYSGKGLTRFSGSKLKNEGGFTRKYSLSSKTGTLLPEFPSAQHLVLQDSVSKEKVDTLIMMYKTHCQCILDNAINVNFEEIQNFLLHFWQGMPEHLLPLLENPVIVDIFCVCDSILYKVLTDVLIPATMQDMPESLLADIRNFAKHWEHWMLSSLENLPEILSEKKVPIARRFVSSLKRQTSFLHLAQIARPALFDQIVVTSMVNDIDKVDLNSIGSQALLSVTNDQDSDFYSEYDSISVFQELKDLLRKNATVESFIEWLDSVVEQKVIKPSKQNGRSVKKRAQDFLLKWSFFGARVMHNLTLNNATSFGSFHLIRMLLDEYILLAIETQFNNDKEQDLQNLLEKYMRSADASKATFTASPSSCFLANRNKPGVSSSDSAVKDEIPPEDDYLTLAAAQQGLGAGTVVYHSADPDNFTIAGQMDFSQNSAPLMTPPISPAMMNRSSVINQGPMAMRPQTSCPIQGQLPCQTFPEPLYQSLHNPPSGSYPNASYYQPMFRTQTHTESGRYAFSGHHLSKDCFSNSCTASPYGTRGSSGGYTAAGDAGMETEAVQMLESSGFGFGGTTGAADGCSGPVCSSGHRYYGSSSGYVDAPRMGTFIDQHVSVISSVSSIRSVSAYAEAHDPLNILDDTSRKTRPYYTELSAMGTHTAGSSIAHSCSVSAPCMYGAPAPYHSQNTLLPLQGATEIREMMSSLPPINTVFMGSTSGPP.

The RFX-type winged-helix DNA-binding region spans 56 to 131; it reads TLQWLEDNYI…YHYYGIGIKE (76 aa).

The protein belongs to the RFX family. Expressed in progenitors and hormone expressing cells of the islet lineage.

It localises to the nucleus. In terms of biological role, transcription factor required to direct islet cell differentiation during endocrine pancreas development. The protein is DNA-binding protein RFX6 (rfx6) of Danio rerio (Zebrafish).